The following is a 73-amino-acid chain: Beta-defensin 50 (73 aa).

Residues 1 to 23 form the signal peptide; the sequence is MKTLCFLLLTSGLLYLMVKGVGS. 2 disulfide bridges follow: cysteine 34–cysteine 63 and cysteine 46–cysteine 64.

It belongs to the beta-defensin family. In terms of tissue distribution, highly expressed in prostate. Not expressed in uterus, epididymis, ovary, testis, spleen, submaxillary gland, thymus, thyroid, pancreas, smooth muscle, skeletal muscle, heart, kidney, lung, liver, eye and brain.

Its subcellular location is the secreted. Functionally, has bactericidal activity. The chain is Beta-defensin 50 (Defb50) from Mus musculus (Mouse).